Reading from the N-terminus, the 254-residue chain is uncharacterized protein (254 aa).

This is an uncharacterized protein from Aedes vexans (Inland floodwater mosquito).